A 548-amino-acid polypeptide reads, in one-letter code: WEB family protein At1g12150 (548 aa).

Residues Lys-71–Asn-544 are a coiled coil. Over residues Val-430–Glu-448 the composition is skewed to basic and acidic residues. The tract at residues Val-430 to Ile-455 is disordered.

The protein belongs to the WEB family.

The protein is WEB family protein At1g12150 of Arabidopsis thaliana (Mouse-ear cress).